Consider the following 292-residue polypeptide: DCN1-like protein 4 (292 aa).

Residues 43–83 (HQTGSLRSCSSSDCFNKVMPPRKKRRPASGDDLSAKKSRHD) form a disordered region. Polar residues predominate over residues 45–56 (TGSLRSCSSSDC). Lys95 is covalently cross-linked (Glycyl lysine isopeptide (Lys-Gly) (interchain with G-Cter in SUMO2)). One can recognise a DCUN1 domain in the interval 101 to 287 (FSSKRCLEWF…LLDEFVEWYK (187 aa)).

In terms of assembly, interacts (via the DCUN1 domain) with the unneddylated cullins: interacts with CUL1, CUL2, CUL3, CUL4A, CUL4B and CUL5; these interactions promote the cullin neddylation and the identity of the cullin dictates the affinity of the interaction. Interacts with RBX1 and RNF7. Interacts with CAND1; this interaction is bridged by cullins such as CUL3 and strongly inhibits the neddylation of CUL3. These CAND-cullin-DCNL complexes can only be neddylated in the presence of a substrate adapter. Interacts (via DCUN1 domain) with UBE2M (N-terminally acetylated form) and probably with UBE2F (N-terminally acetylated form).

The protein resides in the nucleus. Functionally, contributes to the neddylation of all cullins by transferring NEDD8 from N-terminally acetylated NEDD8-conjugating E2s enzyme to different cullin C-terminal domain-RBX complexes which are necessary for the activation of cullin-RING E3 ubiquitin ligases (CRLs). This chain is DCN1-like protein 4, found in Homo sapiens (Human).